The chain runs to 99 residues: MDHKAYMYVLECRDGSYYIGYTTDMRRRLAIHNSGKGAKYTRARLPVKLIYAQGFASKEEAMSAEALLKRKKRPQKEEFLSENQDRNLLSYFEESWGVL.

The GIY-YIG domain occupies 3-78; it reads HKAYMYVLEC…KRKKRPQKEE (76 aa).

The protein belongs to the UPF0213 family.

In Streptococcus pneumoniae serotype 4 (strain ATCC BAA-334 / TIGR4), this protein is UPF0213 protein SP_1535.